Here is a 241-residue protein sequence, read N- to C-terminus: MMDRLNCVCPDGEFLLIDKPLGWTSFDVVARIRTSYKKNGLKRKVGHCGTLDPLATGLLMLATGKKTKEISSIEILDKEYTGAIKLGVKTPSYDGETEEFDFCETSHLTSSEIHEAARQFLGKQQQKPPMFSATWHKGKRLYEHARQGKDIPERKSKDVEVFAFDITGIELPIVRFRLQVTKGTYVRSIANDFGERLGVGGYLTELRRTKIGDFSISQAETVSDILEKIVKTAEAHQANLT.

Asp52 serves as the catalytic Nucleophile.

It belongs to the pseudouridine synthase TruB family. Type 1 subfamily.

It carries out the reaction uridine(55) in tRNA = pseudouridine(55) in tRNA. In terms of biological role, responsible for synthesis of pseudouridine from uracil-55 in the psi GC loop of transfer RNAs. In Chloroherpeton thalassium (strain ATCC 35110 / GB-78), this protein is tRNA pseudouridine synthase B.